The following is a 403-amino-acid chain: Probable tubulin--tyrosine ligase C12B10.04 (403 aa).

The TTL domain maps to Lys9–Asn386.

It belongs to the tubulin--tyrosine ligase family. The cofactor is Mg(2+). K(+) is required as a cofactor.

It localises to the cytoplasm. The protein localises to the nucleus. The enzyme catalyses C-terminal L-alpha-aminoacyl-L-glutamyl-L-glutamyl-[tubulin] + L-tyrosine + ATP = C-terminal L-alpha-aminoacyl-L-glutamyl-L-glutamyl-L-tyrosyl-[tubulin] + ADP + phosphate + H(+). Functionally, probable tubulin--tyrosine ligase. The protein is Probable tubulin--tyrosine ligase C12B10.04 of Schizosaccharomyces pombe (strain 972 / ATCC 24843) (Fission yeast).